Reading from the N-terminus, the 397-residue chain is Adenylosuccinate synthetase (397 aa).

GTP is bound by residues 11–17 and 39–41; these read GDEGKGK and GHT. D12 acts as the Proton acceptor in catalysis. Positions 12 and 39 each coordinate Mg(2+). IMP-binding positions include 12 to 15, 37 to 40, T125, R139, Q212, T227, and R290; these read DEGK and NAGH. H40 functions as the Proton donor in the catalytic mechanism. Position 286–292 (286–292) interacts with substrate; the sequence is STTGRPR. Residues R292, 318–320, and 386–388 each bind GTP; these read KAD and STG.

Belongs to the adenylosuccinate synthetase family. As to quaternary structure, homodimer. Requires Mg(2+) as cofactor.

The protein localises to the cytoplasm. The catalysed reaction is IMP + L-aspartate + GTP = N(6)-(1,2-dicarboxyethyl)-AMP + GDP + phosphate + 2 H(+). It functions in the pathway purine metabolism; AMP biosynthesis via de novo pathway; AMP from IMP: step 1/2. In terms of biological role, plays an important role in the de novo pathway of purine nucleotide biosynthesis. Catalyzes the first committed step in the biosynthesis of AMP from IMP. The sequence is that of Adenylosuccinate synthetase from Thermotoga maritima (strain ATCC 43589 / DSM 3109 / JCM 10099 / NBRC 100826 / MSB8).